We begin with the raw amino-acid sequence, 218 residues long: Peptide methionine sulfoxide reductase A2 (218 aa).

Residues 1–19 (MDSSLKTQEPQVVETSPSP) show a composition bias toward polar residues. The segment at 1 to 30 (MDSSLKTQEPQVVETSPSPVAQEPPQVADK) is disordered. The residue at position 205 (Ser-205) is a Phosphoserine.

Belongs to the MsrA Met sulfoxide reductase family.

It localises to the cytoplasm. Its subcellular location is the cytosol. It carries out the reaction L-methionyl-[protein] + [thioredoxin]-disulfide + H2O = L-methionyl-(S)-S-oxide-[protein] + [thioredoxin]-dithiol. It catalyses the reaction [thioredoxin]-disulfide + L-methionine + H2O = L-methionine (S)-S-oxide + [thioredoxin]-dithiol. With respect to regulation, activated during dark in short day conditions. In terms of biological role, catalyzes the reduction of methionine sulfoxide (MetSO) to methionine in proteins. Plays a protective role against oxidative stress by restoring activity to proteins that have been inactivated by methionine oxidation. Prevents cellular oxidative damage in long nights. MSRA family specifically reduces the MetSO S-enantiomer. This chain is Peptide methionine sulfoxide reductase A2 (MRSA2), found in Arabidopsis thaliana (Mouse-ear cress).